We begin with the raw amino-acid sequence, 537 residues long: MSTASSSSSQTPHSAPQRMRRSTAGSPPAAAGSGTGPAGSCAPAAGAGRLLQPIRATVPYQLLRGSQHSPTRPAAAATAAAALGSLSGPGGARGPSPSSPTPPPAAAPAEQAPRAKGRPRRSPESRRRSSSPERRSPGSPVCRVDRPKSQHIRTSSTIRRTSSLDTITGPYLTGQWPRDPHVHYPSCMRDKATQTPSCWAEEGAEKRSHQRSASWGSADQLKEIAKLRQQLQRSKQSSRHSKEKDRQSPLHGNHITISHTQAIGSRSVPMPLSNISVPKSSVSRVPCNVEGISPELEKVFIKENNGKEEVSKPLDIPDGRRAPLPAHYRSSSTRSIDTQTPSVQERSSSCSSHSPCVSPFCPPESQDGSPCSTEDLLYDRDKDSGSSSPLPKYASSPKPNNSYMFKREPPEGCERVKVFEEMASRQPISAPLFSCPDKNKVNFIPTGSAFCPVKLLGPLLPASDLMLKNSPNSGQSSALATLTVEQLSSRVSFTSLSDDTSTADSLEPSAQQPSQQQQLLQDLQVEEHVSTQNYVMI.

Disordered regions lie at residues 1 to 45 and 62 to 254; these read MSTA…APAA and LLRG…HGNH. Residues serine 69, serine 96, serine 98, and serine 99 each carry the phosphoserine modification. Positions 69 to 86 are enriched in low complexity; that stretch reads SPTRPAAAATAAAALGSL. Positions 97 to 106 are enriched in pro residues; that stretch reads PSSPTPPPAA. A Phosphothreonine modification is found at threonine 101. Positions 121-136 are enriched in basic and acidic residues; it reads RSPESRRRSSSPERRS. The span at 152 to 168 shows a compositional bias: low complexity; the sequence is IRTSSTIRRTSSLDTIT. Phosphoserine is present on residues serine 162 and serine 163. Phosphothreonine occurs at positions 166 and 168. A compositionally biased stretch (basic and acidic residues) spans 178–192; the sequence is RDPHVHYPSCMRDKA. A Phosphoserine modification is found at serine 214. Residues 217–244 adopt a coiled-coil conformation; it reads SADQLKEIAKLRQQLQRSKQSSRHSKEK. Serine 248 bears the Phosphoserine mark. Residue threonine 256 is modified to Phosphothreonine. The residue at position 293 (serine 293) is a Phosphoserine. Residues 309-321 show a composition bias toward basic and acidic residues; that stretch reads EVSKPLDIPDGRR. The disordered stretch occupies residues 309 to 407; it reads EVSKPLDIPD…KPNNSYMFKR (99 aa). A compositionally biased stretch (polar residues) spans 329 to 346; it reads RSSSTRSIDTQTPSVQER. Threonine 333 carries the phosphothreonine modification. Position 335 is a phosphoserine (serine 335). The residue at position 340 (threonine 340) is a Phosphothreonine. Residues 347–359 show a composition bias toward low complexity; the sequence is SSSCSSHSPCVSP. Residues serine 384, serine 388, serine 396, serine 402, and serine 470 each carry the phosphoserine modification. Residues 495-520 are disordered; the sequence is SLSDDTSTADSLEPSAQQPSQQQQLL.

As to expression, predominantly expressed in thymus and testis, especially in CD4+CD8+ cells and at specific stages of spermatogenesis.

The sequence is that of Glucocorticoid-induced transcript 1 protein (Glcci1) from Mus musculus (Mouse).